The primary structure comprises 760 residues: U-box domain-containing protein 3 (760 aa).

The stretch at 146–217 forms a coiled coil; that stretch reads LMELMENALR…EQTEQLIELV (72 aa). One can recognise a U-box domain in the interval 237–311; it reads SIPPYFRCPL…ASWLEANRIN (75 aa). The span at 424–434 shows a compositional bias: polar residues; that stretch reads ILGNHQSSSEM. The disordered stretch occupies residues 424–448; sequence ILGNHQSSSEMSPKKNLESSNNVNH. ARM repeat units follow at residues 504 to 543, 545 to 584, 586 to 626, 628 to 666, and 668 to 707; these read IENRVHIGRCGAITPLLSLLYSEEKLTQEHAVTALLNLSI, ELNKAMIVEVGAIEPLVHVLNTGNDRAKENSAASLFSLSV, QVNR…NLSI, HDNKARIVQAKAVKYLVELLDPDLEMVDKAVALLANLSA, and GEGRQAIVREGGIPLLVETVDLGSQRGKENAASVLLQLCL.

The enzyme catalyses S-ubiquitinyl-[E2 ubiquitin-conjugating enzyme]-L-cysteine + [acceptor protein]-L-lysine = [E2 ubiquitin-conjugating enzyme]-L-cysteine + N(6)-ubiquitinyl-[acceptor protein]-L-lysine.. It participates in protein modification; protein ubiquitination. Functionally, functions as an E3 ubiquitin ligase. This chain is U-box domain-containing protein 3 (PUB3), found in Arabidopsis thaliana (Mouse-ear cress).